Consider the following 364-residue polypeptide: tRNA N6-adenosine threonylcarbamoyltransferase (364 aa).

The Fe cation site is built by His-115 and His-119. Substrate is bound by residues 137 to 141 (LVSGG), Asp-170, Gly-183, and Asn-288. Asp-316 serves as a coordination point for Fe cation.

The protein belongs to the KAE1 / TsaD family. Fe(2+) is required as a cofactor.

The protein resides in the cytoplasm. It catalyses the reaction L-threonylcarbamoyladenylate + adenosine(37) in tRNA = N(6)-L-threonylcarbamoyladenosine(37) in tRNA + AMP + H(+). Functionally, required for the formation of a threonylcarbamoyl group on adenosine at position 37 (t(6)A37) in tRNAs that read codons beginning with adenine. Is involved in the transfer of the threonylcarbamoyl moiety of threonylcarbamoyl-AMP (TC-AMP) to the N6 group of A37, together with TsaE and TsaB. TsaD likely plays a direct catalytic role in this reaction. This chain is tRNA N6-adenosine threonylcarbamoyltransferase, found in Bartonella bacilliformis (strain ATCC 35685 / KC583 / Herrer 020/F12,63).